The sequence spans 218 residues: Small ribosomal subunit protein uS5 (218 aa).

Residues 1–45 (MPGRQRRDGGNGPAGQNSNGPEGRDNRRGGGDRRGGGDRRDNAAE) form a disordered region. Residues 22-45 (EGRDNRRGGGDRRGGGDRRDNAAE) are compositionally biased toward basic and acidic residues. The region spanning 48–111 (QLERVVAINR…EEARKGFFRV (64 aa)) is the S5 DRBM domain.

Belongs to the universal ribosomal protein uS5 family. Part of the 30S ribosomal subunit. Contacts proteins S4 and S8.

Its function is as follows. With S4 and S12 plays an important role in translational accuracy. Located at the back of the 30S subunit body where it stabilizes the conformation of the head with respect to the body. The polypeptide is Small ribosomal subunit protein uS5 (Nocardia farcinica (strain IFM 10152)).